The chain runs to 699 residues: SPS-sensor serine protease component SSY5 (699 aa).

Disordered regions lie at residues 1-113 (MVRF…LQGF) and 129-158 (VKEE…GNAR). A propeptide spanning residues 1–381 (MVRFFGLNKK…YCVKDYIKKA (381 aa)) is cleaved from the precursor. Residues 24 to 38 (NEQNAAETSSSNVSG) show a composition bias toward polar residues. Residues 39 to 51 (NEERIDPNSHDAN) are compositionally biased toward basic and acidic residues. Residues 52–78 (PENANNDDASTTFGSSIQSSSIFSRGR) show a composition bias toward low complexity. Residues 83-93 (TGASSSMATSE) show a composition bias toward polar residues. Composition is skewed to low complexity over residues 97-109 (HSSG…NSKN) and 144-154 (SSSTSSTLATS). A serine protease region spans residues 459-699 (FAITCAHVVL…QWDIDPQLDG (241 aa)). Active-site charge relay system residues include His-465, Asp-545, and Ser-640.

The protein belongs to the peptidase S64 family. Component of the plasma membrane SPS (SSY1-PTR3-SSY5) amino acid sensor complex. The propeptide is autoproteolytically cleaved from the catalytic domain but remains associated, forming an inactive protease complex. This processing occurs even in the absence of signaling.

The protein resides in the cell membrane. In terms of biological role, protease component of the SPS-sensor system, which regulates the expression of several amino acid-metabolizing enzymes and amino acid- and peptide-permeases in response to extracellular amino acid levels by controlling the activity of two transcription factors, STP1 and STP2. Catalyzes the activation of these transcription factors, which are synthesized as latent cytoplasmic precursors, by proteolytic removal of an N-terminal inhibitory domain containing cytoplasmic retention motifs. SSY5 binds as an inactive protease complex to STP1. In response to extracellular amino acids and dependent on the other SPS-sensor components, the inhibitory propeptide is induced to dissociate, and thereby enables the catalytic domain to process STP1. This is SPS-sensor serine protease component SSY5 (SSY5) from Saccharomyces cerevisiae (strain YJM789) (Baker's yeast).